A 640-amino-acid chain; its full sequence is Threonine--tRNA ligase (640 aa).

The 59-residue stretch at M1–T59 folds into the TGS domain. Residues D240–P531 form a catalytic region. Zn(2+) is bound by residues C332, H383, and H508.

This sequence belongs to the class-II aminoacyl-tRNA synthetase family. Homodimer. Zn(2+) serves as cofactor.

Its subcellular location is the cytoplasm. It carries out the reaction tRNA(Thr) + L-threonine + ATP = L-threonyl-tRNA(Thr) + AMP + diphosphate + H(+). In terms of biological role, catalyzes the attachment of threonine to tRNA(Thr) in a two-step reaction: L-threonine is first activated by ATP to form Thr-AMP and then transferred to the acceptor end of tRNA(Thr). Also edits incorrectly charged L-seryl-tRNA(Thr). This chain is Threonine--tRNA ligase, found in Thermotoga sp. (strain RQ2).